The chain runs to 210 residues: Thymidylate kinase (210 aa).

11-18 (GVDGSGKS) contributes to the ATP binding site.

This sequence belongs to the thymidylate kinase family.

It catalyses the reaction dTMP + ATP = dTDP + ADP. Its function is as follows. Phosphorylation of dTMP to form dTDP in both de novo and salvage pathways of dTTP synthesis. In Mycoplasmoides gallisepticum (strain R(low / passage 15 / clone 2)) (Mycoplasma gallisepticum), this protein is Thymidylate kinase.